A 114-amino-acid polypeptide reads, in one-letter code: Pro-FMRFamide-related neuropeptide FF (114 aa).

A signal peptide spans 1–21 (MDSKWAALLLLLLLLLNWGHT). A propeptide spanning residues 22–69 (EEAGSWGEDQVFAGEDKGPHPPQYAHIPDRIQTPGSLFRVLLQAMDTP) is cleaved from the precursor. Phe-82 is subject to Phenylalanine amide. The propeptide occupies 85–100 (SAWGSWSKEQLNPQAR). The residue at position 111 (Phe-111) is a Phenylalanine amide.

It belongs to the FARP (FMRFamide related peptide) family.

It is found in the secreted. Morphine modulating peptides. Have wide-ranging physiologic effects, including the modulation of morphine-induced analgesia, elevation of arterial blood pressure, and increased somatostatin secretion from the pancreas. Neuropeptide FF potentiates and sensitizes ASIC1 and ASIC3 channels. This is Pro-FMRFamide-related neuropeptide FF (Npff) from Mus musculus (Mouse).